A 240-amino-acid polypeptide reads, in one-letter code: tRNA (guanine-N(7)-)-methyltransferase (240 aa).

The interval 1-20 (MTESHDTPITPDGEARPHRR) is disordered. 4 residues coordinate S-adenosyl-L-methionine: Glu70, Glu95, Asp122, and Asp145. Residue Asp145 is part of the active site. Substrate is bound by residues Lys149, Asp181, and 218 to 221 (TKFE).

It belongs to the class I-like SAM-binding methyltransferase superfamily. TrmB family.

The catalysed reaction is guanosine(46) in tRNA + S-adenosyl-L-methionine = N(7)-methylguanosine(46) in tRNA + S-adenosyl-L-homocysteine. It functions in the pathway tRNA modification; N(7)-methylguanine-tRNA biosynthesis. Functionally, catalyzes the formation of N(7)-methylguanine at position 46 (m7G46) in tRNA. The polypeptide is tRNA (guanine-N(7)-)-methyltransferase (Pseudomonas putida (strain ATCC 47054 / DSM 6125 / CFBP 8728 / NCIMB 11950 / KT2440)).